The sequence spans 207 residues: Probable RNA 2'-phosphotransferase (207 aa).

Belongs to the KptA/TPT1 family.

Its function is as follows. Removes the 2'-phosphate from RNA via an intermediate in which the phosphate is ADP-ribosylated by NAD followed by a presumed transesterification to release the RNA and generate ADP-ribose 1''-2''-cyclic phosphate (APPR&gt;P). May function as an ADP-ribosylase. The sequence is that of Probable RNA 2'-phosphotransferase from Methanosarcina barkeri (strain Fusaro / DSM 804).